Consider the following 59-residue polypeptide: Large ribosomal subunit protein bL32 (59 aa).

Basic residues predominate over residues methionine 1–methionine 15. The disordered stretch occupies residues methionine 1–serine 21.

Belongs to the bacterial ribosomal protein bL32 family.

The chain is Large ribosomal subunit protein bL32 from Alkaliphilus metalliredigens (strain QYMF).